Reading from the N-terminus, the 100-residue chain is NADH-quinone oxidoreductase subunit K (100 aa).

A run of 3 helical transmembrane segments spans residues 4–24 (LSHG…GMII), 28–48 (LLFM…AFVV), and 60–80 (VMYI…LALL).

It belongs to the complex I subunit 4L family. As to quaternary structure, NDH-1 is composed of 13 different subunits. Subunits NuoA, H, J, K, L, M, N constitute the membrane sector of the complex.

The protein localises to the cell inner membrane. The catalysed reaction is a quinone + NADH + 5 H(+)(in) = a quinol + NAD(+) + 4 H(+)(out). NDH-1 shuttles electrons from NADH, via FMN and iron-sulfur (Fe-S) centers, to quinones in the respiratory chain. The immediate electron acceptor for the enzyme in this species is believed to be ubiquinone. Couples the redox reaction to proton translocation (for every two electrons transferred, four hydrogen ions are translocated across the cytoplasmic membrane), and thus conserves the redox energy in a proton gradient. In Sodalis glossinidius (strain morsitans), this protein is NADH-quinone oxidoreductase subunit K.